Reading from the N-terminus, the 815-residue chain is G-type lectin S-receptor-like serine/threonine-protein kinase SD1-1 (815 aa).

The N-terminal stretch at 1–22 (MREIHSLFSLSLFLISSSLSVA) is a signal peptide. Topologically, residues 23–438 (LDYNVITPKE…FAKIEFKGRE (416 aa)) are extracellular. One can recognise a Bulb-type lectin domain in the interval 25–152 (YNVITPKEFL…EEAVLWQSFD (128 aa)). Asn93, Asn249, and Asn265 each carry an N-linked (GlcNAc...) asparagine glycan. The region spanning 288 to 326 (PEDECDYYSICGAYAVCGINSKNTPSCSCLQGFKPKSGR) is the EGF-like domain. 2 disulfide bridges follow: Cys292/Cys304 and Cys298/Cys314. 2 N-linked (GlcNAc...) asparagine glycosylation sites follow: Asn329 and Asn385. The 84-residue stretch at 345–428 (CEKKDAFVKF…FGQDVYIRMG (84 aa)) folds into the PAN domain. Cystine bridges form between Cys378–Cys403 and Cys382–Cys388. A helical transmembrane segment spans residues 439-459 (VVGMVVGSVVAIAVVLVVVFA). Over 460 to 815 (CFRKKIMKRY…EVSITMLQGR (356 aa)) the chain is Cytoplasmic. The Protein kinase domain maps to 500 to 783 (FSYVNFLGRG…SDSSLPHPTQ (284 aa)). Residues 506 to 514 (LGRGGFGPV) and Lys528 contribute to the ATP site. Ser534 bears the Phosphoserine mark. The caM-binding stretch occupies residues 589 to 606 (RRSTELDWKKRMNIINGV). Asp625 serves as the catalytic Proton acceptor. At Ser642 the chain carries Phosphoserine. A Phosphothreonine modification is found at Thr659. A phosphoserine mark is found at Ser797 and Ser803. Thr810 is subject to Phosphothreonine.

Belongs to the protein kinase superfamily. Ser/Thr protein kinase family. In terms of assembly, interacts with PUB9, PUB13 and PUB14.

It localises to the cell membrane. It catalyses the reaction L-seryl-[protein] + ATP = O-phospho-L-seryl-[protein] + ADP + H(+). It carries out the reaction L-threonyl-[protein] + ATP = O-phospho-L-threonyl-[protein] + ADP + H(+). This chain is G-type lectin S-receptor-like serine/threonine-protein kinase SD1-1 (SD11), found in Arabidopsis thaliana (Mouse-ear cress).